The primary structure comprises 243 residues: Uridylate kinase (243 aa).

15-18 is a binding site for ATP; sequence KLSG. The segment at 23–28 is involved in allosteric activation by GTP; that stretch reads GEEGFG. UMP is bound at residue Gly57. 2 residues coordinate ATP: Gly58 and Arg62. UMP contacts are provided by residues Asp77 and 138–145; that span reads TGNPFCTT. ATP contacts are provided by Thr165, Tyr171, and Asp174.

Belongs to the UMP kinase family. As to quaternary structure, homohexamer.

The protein resides in the cytoplasm. The enzyme catalyses UMP + ATP = UDP + ADP. It participates in pyrimidine metabolism; CTP biosynthesis via de novo pathway; UDP from UMP (UMPK route): step 1/1. Its activity is regulated as follows. Allosterically activated by GTP. Inhibited by UTP. In terms of biological role, catalyzes the reversible phosphorylation of UMP to UDP. This chain is Uridylate kinase, found in Shewanella denitrificans (strain OS217 / ATCC BAA-1090 / DSM 15013).